A 368-amino-acid polypeptide reads, in one-letter code: MRKSEHKLTFMQTLIMISSTLIGAGVLTLPRSAAETGSPSGWLMILLQGVIFIIIVLLFLPFLQKNSGKTLFKLNSIVAGKFIGFLLNLYICLYFIGIVCFQARILGEVVGFFLLKNTPMAVVVFIFLAVAIYHVGGGVYSIAKVYAYIFPITLIIFMMLLMFSFRLFQLDFIRPVFEGGYQSFFSLFPKTLLYFSGFEIIFYLVPFMRDPKQVKKAVALGIATSTLFYSITLLIVIGCMTVAEAKTVTWPTISLIHALEVPGIFIERFDLFLQLTWTAQQFACMLGSFKGAHIGLTEIFHLKNKNNAWLLTAMLAATFFITMYPKDLNDVFYYGTLLGYAFLIVITIPFFVWFLSWIQKKIGRGQLQ.

Transmembrane regions (helical) follow at residues 10–30 (FMQTLIMISSTLIGAGVLTLP), 43–63 (LMILLQGVIFIIIVLLFLPFL), 82–102 (FIGFLLNLYICLYFIGIVCFQ), 120–140 (MAVVVFIFLAVAIYHVGGGVY), 145–165 (VYAYIFPITLIIFMMLLMFSF), 187–207 (LFPKTLLYFSGFEIIFYLVPF), 217–237 (AVALGIATSTLFYSITLLIVI), 282–302 (FACMLGSFKGAHIGLTEIFHL), 308–328 (AWLLTAMLAATFFITMYPKDL), and 338–358 (LGYAFLIVITIPFFVWFLSWI).

The protein belongs to the amino acid-polyamine-organocation (APC) superfamily. Spore germination protein (SGP) (TC 2.A.3.9) family.

Its subcellular location is the cell membrane. Its function is as follows. Involved in the response to the germinative mixture of L-asparagine, glucose, fructose and potassium ions (AGFK). Could be an amino acid transporter. Cannot stimulate germination in the absence of gerD and gerK gene products (fructose and glucose receptors, respectively). The polypeptide is Spore germination protein B2 (gerBB) (Bacillus subtilis (strain 168)).